A 517-amino-acid polypeptide reads, in one-letter code: Serine hydroxymethyltransferase 2, mitochondrial (517 aa).

A mitochondrion-targeting transit peptide spans 1 to 29 (MALALRRLSSSVKKPISLLSSNGGSLRFM). Position 82 (S82) interacts with L-serine. Residues S82, Y102, E104, Y112, 148–150 (SGS), and H177 each bind pemetrexed. Residues E104 and Y112 each coordinate L-serine. E104 lines the methotrexate pocket. Residue 184–186 (TDT) coordinates methotrexate. Pemetrexed contacts are provided by S232 and H260. Residues H260 and K286 each contribute to the L-serine site. At K286 the chain carries N6-(pyridoxal phosphate)lysine. G331 contributes to the pemetrexed binding site. K414 provides a ligand contact to methotrexate. R430 is a binding site for L-serine. R430 provides a ligand contact to pemetrexed.

The protein belongs to the SHMT family. In terms of assembly, homotetramer. Requires pyridoxal 5'-phosphate as cofactor. Ubiquitous. Mainly expressed in the shoot apical meristem and roots. Also detected in the leaf vasculature, especially in the protoxylem and adjacent cell layers.

The protein localises to the mitochondrion. The enzyme catalyses (6R)-5,10-methylene-5,6,7,8-tetrahydrofolate + glycine + H2O = (6S)-5,6,7,8-tetrahydrofolate + L-serine. It participates in one-carbon metabolism; tetrahydrofolate interconversion. Its activity is regulated as follows. Inhibited by the antifolate drugs methotrexate and pemetrexed. Its function is as follows. Functions outside the photorespiratory pathway in catalyzing the interconversion of serine and glycine with the conversion of tetrahydrofolate (THF) into 5,10-methylene-THF. The chain is Serine hydroxymethyltransferase 2, mitochondrial from Arabidopsis thaliana (Mouse-ear cress).